A 273-amino-acid polypeptide reads, in one-letter code: 2,3,4,5-tetrahydropyridine-2,6-dicarboxylate N-succinyltransferase (273 aa).

Arg104 and Asp141 together coordinate substrate.

It belongs to the transferase hexapeptide repeat family. Homotrimer.

Its subcellular location is the cytoplasm. It catalyses the reaction (S)-2,3,4,5-tetrahydrodipicolinate + succinyl-CoA + H2O = (S)-2-succinylamino-6-oxoheptanedioate + CoA. It functions in the pathway amino-acid biosynthesis; L-lysine biosynthesis via DAP pathway; LL-2,6-diaminopimelate from (S)-tetrahydrodipicolinate (succinylase route): step 1/3. In Aromatoleum aromaticum (strain DSM 19018 / LMG 30748 / EbN1) (Azoarcus sp. (strain EbN1)), this protein is 2,3,4,5-tetrahydropyridine-2,6-dicarboxylate N-succinyltransferase.